Reading from the N-terminus, the 381-residue chain is Chaperone protein DnaJ (381 aa).

The J domain maps to 5–70; sequence DFYEVLGVSR…QKKAAYDQYG (66 aa). The CR-type zinc-finger motif lies at 136 to 214; it reads GVTKEIEVPT…CHGQGRKQKT (79 aa). Residues Cys-149, Cys-152, Cys-166, Cys-169, Cys-188, Cys-191, Cys-202, and Cys-205 each contribute to the Zn(2+) site. 4 CXXCXGXG motif repeats span residues 149–156, 166–173, 188–195, and 202–209; these read CDSCDGSG, CGTCHGHG, CPTCHGKG, and CNECHGQG.

Belongs to the DnaJ family. In terms of assembly, homodimer. It depends on Zn(2+) as a cofactor.

Its subcellular location is the cytoplasm. Functionally, participates actively in the response to hyperosmotic and heat shock by preventing the aggregation of stress-denatured proteins and by disaggregating proteins, also in an autonomous, DnaK-independent fashion. Unfolded proteins bind initially to DnaJ; upon interaction with the DnaJ-bound protein, DnaK hydrolyzes its bound ATP, resulting in the formation of a stable complex. GrpE releases ADP from DnaK; ATP binding to DnaK triggers the release of the substrate protein, thus completing the reaction cycle. Several rounds of ATP-dependent interactions between DnaJ, DnaK and GrpE are required for fully efficient folding. Also involved, together with DnaK and GrpE, in the DNA replication of plasmids through activation of initiation proteins. The protein is Chaperone protein DnaJ of Vibrio parahaemolyticus serotype O3:K6 (strain RIMD 2210633).